Consider the following 156-residue polypeptide: Small ribosomal subunit protein uS7 (156 aa).

It belongs to the universal ribosomal protein uS7 family. In terms of assembly, part of the 30S ribosomal subunit. Contacts proteins S9 and S11.

Its function is as follows. One of the primary rRNA binding proteins, it binds directly to 16S rRNA where it nucleates assembly of the head domain of the 30S subunit. Is located at the subunit interface close to the decoding center, probably blocks exit of the E-site tRNA. This is Small ribosomal subunit protein uS7 from Clostridium botulinum (strain Alaska E43 / Type E3).